A 731-amino-acid polypeptide reads, in one-letter code: 1,4-alpha-glucan branching enzyme GlgB (731 aa).

A disulfide bridge connects residues cysteine 193 and cysteine 617. Catalysis depends on aspartate 411, which acts as the Nucleophile. Catalysis depends on glutamate 464, which acts as the Proton donor.

This sequence belongs to the glycosyl hydrolase 13 family. GlgB subfamily. As to quaternary structure, monomer.

It carries out the reaction Transfers a segment of a (1-&gt;4)-alpha-D-glucan chain to a primary hydroxy group in a similar glucan chain.. The protein operates within glycan biosynthesis; glycogen biosynthesis. It functions in the pathway capsule biogenesis; capsule polysaccharide biosynthesis. In terms of biological role, essential enzyme that catalyzes the formation of the alpha-1,6-glucosidic linkages in glucan chains by scission of a 1,4-alpha-linked oligosaccharide from growing alpha-1,4-glucan chains and the subsequent attachment of the oligosaccharide to the alpha-1,6 position. Is involved in the biosynthesis of both glycogen and capsular alpha-D-glucan. The chain is 1,4-alpha-glucan branching enzyme GlgB (glgB) from Mycobacterium tuberculosis (strain CDC 1551 / Oshkosh).